A 310-amino-acid polypeptide reads, in one-letter code: Malate dehydrogenase (310 aa).

Residues glycine 7 to glycine 12 and aspartate 32 contribute to the NAD(+) site. Positions 81 and 87 each coordinate substrate. NAD(+)-binding positions include asparagine 94 and valine 117 to asparagine 119. Positions 119 and 150 each coordinate substrate. Histidine 174 serves as the catalytic Proton acceptor.

It belongs to the LDH/MDH superfamily. MDH type 3 family.

It carries out the reaction (S)-malate + NAD(+) = oxaloacetate + NADH + H(+). Its function is as follows. Catalyzes the reversible oxidation of malate to oxaloacetate. In Chlorobium phaeobacteroides (strain DSM 266 / SMG 266 / 2430), this protein is Malate dehydrogenase.